A 711-amino-acid chain; its full sequence is Ribosomal RNA large subunit methyltransferase K/L (711 aa).

The THUMP domain maps to 42–153 (DAQRAVLWSR…KGRATISVDL (112 aa)).

Belongs to the methyltransferase superfamily. RlmKL family.

The protein resides in the cytoplasm. The enzyme catalyses guanosine(2445) in 23S rRNA + S-adenosyl-L-methionine = N(2)-methylguanosine(2445) in 23S rRNA + S-adenosyl-L-homocysteine + H(+). It carries out the reaction guanosine(2069) in 23S rRNA + S-adenosyl-L-methionine = N(2)-methylguanosine(2069) in 23S rRNA + S-adenosyl-L-homocysteine + H(+). In terms of biological role, specifically methylates the guanine in position 2445 (m2G2445) and the guanine in position 2069 (m7G2069) of 23S rRNA. The protein is Ribosomal RNA large subunit methyltransferase K/L of Xanthomonas oryzae pv. oryzae (strain MAFF 311018).